The sequence spans 181 residues: Large ribosomal subunit protein uL5 (181 aa).

The protein belongs to the universal ribosomal protein uL5 family. As to quaternary structure, part of the 50S ribosomal subunit; contacts the 5S rRNA and probably tRNA. Forms a bridge to the 30S subunit in the 70S ribosome.

Its function is as follows. This is one of the proteins that bind and probably mediate the attachment of the 5S RNA into the large ribosomal subunit, where it forms part of the central protuberance. In the 70S ribosome it contacts protein S13 of the 30S subunit (bridge B1b), connecting the 2 subunits; this bridge is implicated in subunit movement. May contact the P site tRNA; the 5S rRNA and some of its associated proteins might help stabilize positioning of ribosome-bound tRNAs. This Methanococcus aeolicus (strain ATCC BAA-1280 / DSM 17508 / OCM 812 / Nankai-3) protein is Large ribosomal subunit protein uL5.